A 192-amino-acid polypeptide reads, in one-letter code: MLKIDKLLSAPHGIAPVLVRRAPKLVLPFAERSKSRLRAVLDNGDEAALFLARGTVLRGGDLLVAEDGSFVEVQAAAEAVLEVRAEDPHALMRAAYHLGNRHTPVEIGRDYLRLEYDAVLADMLQRLGVRAERAELPFEPEAGAYGGGHKHGHDATFAEDYAAAQAVFHEHHGHSHSHSHDHVHDEKCGHKH.

A disordered region spans residues 170–192; the sequence is EHHGHSHSHSHDHVHDEKCGHKH. Positions 178 to 192 are enriched in basic and acidic residues; the sequence is HSHDHVHDEKCGHKH.

This sequence belongs to the UreE family.

It localises to the cytoplasm. Involved in urease metallocenter assembly. Binds nickel. Probably functions as a nickel donor during metallocenter assembly. In Cupriavidus necator (strain ATCC 17699 / DSM 428 / KCTC 22496 / NCIMB 10442 / H16 / Stanier 337) (Ralstonia eutropha), this protein is Urease accessory protein UreE.